Here is a 476-residue protein sequence, read N- to C-terminus: Glutamyl-tRNA(Gln) amidotransferase subunit A (476 aa).

Residues lysine 76 and serine 151 each act as charge relay system in the active site. Residue serine 175 is the Acyl-ester intermediate of the active site.

Belongs to the amidase family. GatA subfamily. In terms of assembly, heterotrimer of A, B and C subunits.

The enzyme catalyses L-glutamyl-tRNA(Gln) + L-glutamine + ATP + H2O = L-glutaminyl-tRNA(Gln) + L-glutamate + ADP + phosphate + H(+). Functionally, allows the formation of correctly charged Gln-tRNA(Gln) through the transamidation of misacylated Glu-tRNA(Gln) in organisms which lack glutaminyl-tRNA synthetase. The reaction takes place in the presence of glutamine and ATP through an activated gamma-phospho-Glu-tRNA(Gln). The chain is Glutamyl-tRNA(Gln) amidotransferase subunit A from Chlorobium phaeobacteroides (strain DSM 266 / SMG 266 / 2430).